Reading from the N-terminus, the 884-residue chain is Alanine--tRNA ligase (884 aa).

Zn(2+) contacts are provided by histidine 568, histidine 572, cysteine 670, and histidine 674.

This sequence belongs to the class-II aminoacyl-tRNA synthetase family. It depends on Zn(2+) as a cofactor.

The protein resides in the cytoplasm. The enzyme catalyses tRNA(Ala) + L-alanine + ATP = L-alanyl-tRNA(Ala) + AMP + diphosphate. Its function is as follows. Catalyzes the attachment of alanine to tRNA(Ala) in a two-step reaction: alanine is first activated by ATP to form Ala-AMP and then transferred to the acceptor end of tRNA(Ala). Also edits incorrectly charged Ser-tRNA(Ala) and Gly-tRNA(Ala) via its editing domain. This chain is Alanine--tRNA ligase, found in Synechococcus sp. (strain JA-2-3B'a(2-13)) (Cyanobacteria bacterium Yellowstone B-Prime).